We begin with the raw amino-acid sequence, 261 residues long: Transmembrane and immunoglobulin domain-containing protein 1 (261 aa).

The first 27 residues, 1–27 (MAQKTSGLIQRCRFLLLMILFLPHVMT), serve as a signal peptide directing secretion. An Ig-like C2-type 1 domain is found at 28-114 (SSVLSVNGKT…LQRNQSVSIS (87 aa)). Residues 28–219 (SSVLSVNGKT…IVKDKGSTVP (192 aa)) are Extracellular-facing. Cys-54 and Cys-103 form a disulfide bridge. Asn-83, Asn-108, Asn-118, and Asn-189 each carry an N-linked (GlcNAc...) asparagine glycan. Residues 122 to 208 (PPLLSGNDFQ…LIETKTKDFH (87 aa)) form the Ig-like C2-type 2 domain. Cys-143 and Cys-194 are joined by a disulfide. The helical transmembrane segment at 220 to 240 (IEPIIAACVVVFLTLVFGVIA) threads the bilayer. Over 241-261 (RRKRIMKLCRKDQGPQCRTAL) the chain is Cytoplasmic.

Homodimer. In terms of processing, N-glycosylated.

The protein resides in the cell membrane. Its subcellular location is the cytoplasm. Its function is as follows. May control cell-cell adhesion, cell migration and proliferation, cell morphology, and protects renal epithelial cells from oxidative cell injury to promote cell survival. This Bos taurus (Bovine) protein is Transmembrane and immunoglobulin domain-containing protein 1.